Here is a 450-residue protein sequence, read N- to C-terminus: Crh-like protein 4 (450 aa).

An N-terminal signal peptide occupies residues 1–21 (MRLSLVGVAIGLLSSSAIVTA). Cysteines 27 and 34 form a disulfide. In terms of domain architecture, GH16 spans 46 to 228 (YDFTKGSSPD…WAGGETDYSA (183 aa)). The active-site Nucleophile is the Glu119. Catalysis depends on Glu123, which acts as the Proton donor. Residues Glu123, Lys201, Trp205, and Thr216 each contribute to the chitin site. An N-linked (GlcNAc...) asparagine glycan is attached at Asn383.

The protein belongs to the glycosyl hydrolase 16 family. CRH1 subfamily. In terms of processing, the GPI-like anchor contains a phosphoceramide lipid group. The anchor position has not been determined.

It localises to the cell membrane. Its subcellular location is the secreted. It is found in the cell wall. The catalysed reaction is Random endo-hydrolysis of N-acetyl-beta-D-glucosaminide (1-&gt;4)-beta-linkages in chitin and chitodextrins.. In terms of biological role, dual chitinase/transglycosylase that plays a role in cell wall architecture. Chitinase and transglycosylase activities are coupled. Required for the polysaccharide cross-linking at the septa and the cell wall. More specifically, transfers chitin to 1,6-beta-glucan in the cell wall. In Aspergillus fumigatus (strain ATCC MYA-4609 / CBS 101355 / FGSC A1100 / Af293) (Neosartorya fumigata), this protein is Crh-like protein 4.